The sequence spans 466 residues: MGWITEDLIRRNAEHNDCVIFSLEELSLHQQEIERLEHIDKWCRDLKILYLQNNLIGKIENVSKLKKLEYLNLALNNIEKIENLEGCEELAKLDLTVNFIGELSSIKTLKHNIHLKELFLMGNPCAFFDHYREFVVATLPQLKWLDGKGIEPSERIKALQEYSIIEPQIREQEKDHCLKRAKLKEEAQRKHQEEDKNEDKRSNAGFDGRWYTDINATLSSLESKDHLQAPDTEEHNTKKLDNSEDDLEFWNKPCLFTPESRLETLRHMEKQRKNQEKLSERKKKVKPPRTLITEDGKALNVNEPKIDFSLKDNEKQIILDLAVYRYMDTSLINVDVQPTYVRVMIKGKPFQLVLPAEVKPDSSSAKRSQTTGHLVICMPKVGEVITGGQRAFTSVKTTSDRSREHINTRSKHMEKLEVDPSKHSFPDVTNIVQGKKHTPRRRPEPKIIPSEEDPTFEDNPEVPPLI.

LRR repeat units follow at residues 22 to 43, 45 to 66, 67 to 88, and 89 to 110; these read SLEE…DKWC, DLKI…SKLK, KLEY…EGCE, and ELAK…KTLK. One can recognise an LRRCT domain in the interval 123-161; sequence NPCAFFDHYREFVVATLPQLKWLDGKGIEPSERIKALQE. Residues 178-204 are a coiled coil; the sequence is LKRAKLKEEAQRKHQEEDKNEDKRSNA. Composition is skewed to basic and acidic residues over residues 185-202 and 269-279; these read EEAQ…DKRS and EKQRKNQEKLS. Disordered regions lie at residues 185–206 and 269–288; these read EEAQ…NAGF and EKQR…VKPP. Residues 301-396 form the CS domain; it reads VNEPKIDFSL…GGQRAFTSVK (96 aa). The interval 418–466 is disordered; the sequence is VDPSKHSFPDVTNIVQGKKHTPRRRPEPKIIPSEEDPTFEDNPEVPPLI. Over residues 450 to 460 the composition is skewed to acidic residues; sequence SEEDPTFEDNP.

The protein belongs to the tilB family. Interacts (via CS domain) with ZMYND10 (via C-terminus).

Its subcellular location is the cytoplasm. It is found in the cell projection. The protein resides in the cilium. In terms of biological role, may play a role in dynein arm assembly, hence essential for proper axoneme building for cilia motility. This is Protein tilB homolog (LRCC6) from Macaca fascicularis (Crab-eating macaque).